The chain runs to 309 residues: HPr kinase/phosphorylase (309 aa).

Residues H138 and K159 contribute to the active site. An ATP-binding site is contributed by 153 to 160; it reads GKSGVGKS. S160 is a Mg(2+) binding site. The active-site Proton acceptor; for phosphorylation activity. Proton donor; for dephosphorylation activity is D177. The interval 201–210 is important for the catalytic mechanism of both phosphorylation and dephosphorylation; that stretch reads LEIRGLGIIN. Residue E202 coordinates Mg(2+). Residue R243 is part of the active site. Residues 264–269 form an important for the catalytic mechanism of dephosphorylation region; that stretch reads PVRPGR.

Belongs to the HPrK/P family. In terms of assembly, homohexamer. Mg(2+) serves as cofactor.

The enzyme catalyses [HPr protein]-L-serine + ATP = [HPr protein]-O-phospho-L-serine + ADP + H(+). It carries out the reaction [HPr protein]-O-phospho-L-serine + phosphate + H(+) = [HPr protein]-L-serine + diphosphate. Functionally, catalyzes the ATP- as well as the pyrophosphate-dependent phosphorylation of a specific serine residue in HPr, a phosphocarrier protein of the phosphoenolpyruvate-dependent sugar phosphotransferase system (PTS). HprK/P also catalyzes the pyrophosphate-producing, inorganic phosphate-dependent dephosphorylation (phosphorolysis) of seryl-phosphorylated HPr (P-Ser-HPr). The two antagonistic activities of HprK/P are regulated by several intracellular metabolites, which change their concentration in response to the absence or presence of rapidly metabolisable carbon sources (glucose, fructose, etc.) in the growth medium. Also phosphorylates/dephosphorylates the HPr-like catabolite repression protein crh on a specific serine residue. Therefore, by controlling the phosphorylation state of HPr and crh, HPrK/P is a sensor enzyme that plays a major role in the regulation of carbon metabolism and sugar transport: it mediates carbon catabolite repression (CCR), and regulates PTS-catalyzed carbohydrate uptake and inducer exclusion. The protein is HPr kinase/phosphorylase of Geobacillus thermodenitrificans (strain NG80-2).